Here is a 180-residue protein sequence, read N- to C-terminus: Acireductone dioxygenase (180 aa).

Fe(2+) is bound by residues His-99, His-101, Glu-105, and His-145. 4 residues coordinate Ni(2+): His-99, His-101, Glu-105, and His-145.

This sequence belongs to the acireductone dioxygenase (ARD) family. As to quaternary structure, monomer. The cofactor is Fe(2+). Ni(2+) serves as cofactor.

The enzyme catalyses 1,2-dihydroxy-5-(methylsulfanyl)pent-1-en-3-one + O2 = 3-(methylsulfanyl)propanoate + CO + formate + 2 H(+). It catalyses the reaction 1,2-dihydroxy-5-(methylsulfanyl)pent-1-en-3-one + O2 = 4-methylsulfanyl-2-oxobutanoate + formate + 2 H(+). It functions in the pathway amino-acid biosynthesis; L-methionine biosynthesis via salvage pathway; L-methionine from S-methyl-5-thio-alpha-D-ribose 1-phosphate: step 5/6. Functionally, catalyzes 2 different reactions between oxygen and the acireductone 1,2-dihydroxy-3-keto-5-methylthiopentene (DHK-MTPene) depending upon the metal bound in the active site. Fe-containing acireductone dioxygenase (Fe-ARD) produces formate and 2-keto-4-methylthiobutyrate (KMTB), the alpha-ketoacid precursor of methionine in the methionine recycle pathway. Ni-containing acireductone dioxygenase (Ni-ARD) produces methylthiopropionate, carbon monoxide and formate, and does not lie on the methionine recycle pathway. The polypeptide is Acireductone dioxygenase (Geobacillus kaustophilus (strain HTA426)).